Reading from the N-terminus, the 180-residue chain is Adenine phosphoribosyltransferase (180 aa).

This sequence belongs to the purine/pyrimidine phosphoribosyltransferase family. As to quaternary structure, homodimer.

Its subcellular location is the cytoplasm. The catalysed reaction is AMP + diphosphate = 5-phospho-alpha-D-ribose 1-diphosphate + adenine. The protein operates within purine metabolism; AMP biosynthesis via salvage pathway; AMP from adenine: step 1/1. Functionally, catalyzes a salvage reaction resulting in the formation of AMP, that is energically less costly than de novo synthesis. This is Adenine phosphoribosyltransferase from Marinomonas sp. (strain MWYL1).